Consider the following 524-residue polypeptide: Chitinase D (524 aa).

A signal peptide spans 1 to 30 (MNQAVRFRPVITFALAFILIITWFAPRADA). Positions 95 to 180 (VPAGLTSSLV…TSLSVTTSTG (86 aa)) constitute a Fibronectin type-III domain. A GH18 domain is found at 190-514 (KWLIGYWHNF…NAHRPFLNGL (325 aa)). Glu303 functions as the Proton donor in the catalytic mechanism.

It belongs to the glycosyl hydrolase 18 family. Chitinase class II subfamily.

The enzyme catalyses Random endo-hydrolysis of N-acetyl-beta-D-glucosaminide (1-&gt;4)-beta-linkages in chitin and chitodextrins.. This chain is Chitinase D (chiD), found in Niallia circulans (Bacillus circulans).